The primary structure comprises 248 residues: Peroxisomal membrane protein 11A (248 aa).

Topologically, residues 1–97 (MATKAPEKIT…RSSRWDSNHE (97 aa)) are cytoplasmic. A helical membrane pass occupies residues 98-118 (LVLLIIAYGGEGLYYFVEQFI). Residues 119 to 220 (WLTKSGLIDA…MTIADIRDGK (102 aa)) are Lumenal-facing. A helical membrane pass occupies residues 221–241 (GVLSAPNVISSAGLFSAIVST). At 242-248 (HKNWISC) the chain is on the cytoplasmic side.

The protein belongs to the peroxin-11 family. Homooligomer. Interacts with ARC5 and FIS1B on peroxisomes. Expressed in developing siliques.

It localises to the peroxisome membrane. Its function is as follows. Involved in peroxisomal proliferation. Promotes peroxisomal duplication, aggregation or elongation without fission. This chain is Peroxisomal membrane protein 11A (PEX11A), found in Arabidopsis thaliana (Mouse-ear cress).